The chain runs to 279 residues: 2-dehydro-3-deoxyphosphooctonate aldolase (279 aa).

It belongs to the KdsA family.

It is found in the cytoplasm. The catalysed reaction is D-arabinose 5-phosphate + phosphoenolpyruvate + H2O = 3-deoxy-alpha-D-manno-2-octulosonate-8-phosphate + phosphate. It participates in carbohydrate biosynthesis; 3-deoxy-D-manno-octulosonate biosynthesis; 3-deoxy-D-manno-octulosonate from D-ribulose 5-phosphate: step 2/3. Its pathway is bacterial outer membrane biogenesis; lipopolysaccharide biosynthesis. The chain is 2-dehydro-3-deoxyphosphooctonate aldolase from Desulfosudis oleivorans (strain DSM 6200 / JCM 39069 / Hxd3) (Desulfococcus oleovorans).